The following is a 439-amino-acid chain: Membrane sensor protein UhpC (439 aa).

Residues 1 to 25 (MLPFLKAPADAPLMTDKYEIDARYR) lie on the Cytoplasmic side of the membrane. Residues 26-45 (YWRRHILLTIWLGYALFYFT) form a helical membrane-spanning segment. Residues 46–66 (RKSFNAAVPEILANGVLSRSD) are Periplasmic-facing. A helical membrane pass occupies residues 67 to 87 (IGLLATLFYITYGVSKFVSGI). The Cytoplasmic segment spans residues 88 to 95 (VSDRSNAR). Residues 96–118 (YFMGIGLIATGIINILFGFSTSL) traverse the membrane as a helical segment. Over 119 to 121 (WAF) the chain is Periplasmic. A helical transmembrane segment spans residues 122–144 (AVLWVLNAFFQGWGSPVCARLLT). At 145-162 (AWYSRTERGGWWALWNTA) the chain is on the cytoplasmic side. A helical membrane pass occupies residues 163-183 (HNVGGALIPIVMAAAALHYGW). Arg184 is a topological domain (periplasmic). The chain crosses the membrane as a helical span at residues 185–205 (AGMMIAGCMAIVVGIFLCWRL). Residues 206 to 244 (RDRPQALGLPAVGEWRHDALEIAQQQEGAGLTRKEILTK) are Cytoplasmic-facing. A helical transmembrane segment spans residues 245 to 265 (YVLLNPYIWLLSFCYVLVYVV). The Periplasmic portion of the chain corresponds to 266–289 (RAAINDWGNLYMSETLGVDLVTAN). The helical transmembrane segment at 290 to 310 (TAVTMFELGGFIGALVAGWGS) threads the bilayer. The Cytoplasmic segment spans residues 311–322 (DKLFNGNRGPMN). Residues 323–343 (LIFAAGILLSVGSLWLMPFAS) traverse the membrane as a helical segment. Over 344–349 (YVMQAT) the chain is Periplasmic. Residues 350-370 (CFFTIGFFVFGPQMLIGMAAA) form a helical membrane-spanning segment. Over 371–379 (ECSHKEAAG) the chain is Cytoplasmic. Residues 380–400 (AATGFVGLFAYLGASLAGWPL) form a helical membrane-spanning segment. The Periplasmic segment spans residues 401–410 (AKVLDTWHWS). Residues 411-431 (GFFVVISIAAGISALLLLPFL) form a helical membrane-spanning segment. At 432–439 (NAQTPREA) the chain is on the cytoplasmic side.

It belongs to the major facilitator superfamily. Organophosphate:Pi antiporter (OPA) (TC 2.A.1.4) family.

It localises to the cell inner membrane. Part of the UhpABC signaling cascade that controls the expression of the hexose phosphate transporter UhpT. UhpC senses external glucose-6-phosphate and interacts with the histidine kinase UhpB, leading to the stimulation of the autokinase activity of UhpB. This chain is Membrane sensor protein UhpC, found in Escherichia coli (strain K12).